The chain runs to 130 residues: Small ribosomal subunit protein uS9 (130 aa).

It belongs to the universal ribosomal protein uS9 family.

The protein is Small ribosomal subunit protein uS9 of Shigella dysenteriae serotype 1 (strain Sd197).